The primary structure comprises 406 residues: Dual-specificity RNA methyltransferase RlmN (406 aa).

The Proton acceptor role is filled by E119. Residues 125–370 (DKGRGTLCVS…AMVRRTRGDD (246 aa)) form the Radical SAM core domain. C132 and C375 are oxidised to a cystine. 3 residues coordinate [4Fe-4S] cluster: C139, C143, and C146. S-adenosyl-L-methionine contacts are provided by residues 192–193 (GE), S224, 246–248 (SLH), and N332. The S-methylcysteine intermediate role is filled by C375.

It belongs to the radical SAM superfamily. RlmN family. [4Fe-4S] cluster serves as cofactor.

It is found in the cytoplasm. The catalysed reaction is adenosine(2503) in 23S rRNA + 2 reduced [2Fe-2S]-[ferredoxin] + 2 S-adenosyl-L-methionine = 2-methyladenosine(2503) in 23S rRNA + 5'-deoxyadenosine + L-methionine + 2 oxidized [2Fe-2S]-[ferredoxin] + S-adenosyl-L-homocysteine. It catalyses the reaction adenosine(37) in tRNA + 2 reduced [2Fe-2S]-[ferredoxin] + 2 S-adenosyl-L-methionine = 2-methyladenosine(37) in tRNA + 5'-deoxyadenosine + L-methionine + 2 oxidized [2Fe-2S]-[ferredoxin] + S-adenosyl-L-homocysteine. Specifically methylates position 2 of adenine 2503 in 23S rRNA and position 2 of adenine 37 in tRNAs. m2A2503 modification seems to play a crucial role in the proofreading step occurring at the peptidyl transferase center and thus would serve to optimize ribosomal fidelity. This Xylella fastidiosa (strain Temecula1 / ATCC 700964) protein is Dual-specificity RNA methyltransferase RlmN.